The sequence spans 386 residues: NADH-ubiquinone oxidoreductase chain 4 (386 aa).

Helical transmembrane passes span 8-28 (SEFHLEWGITLLTLNFSYFLF), 37-57 (WPLSYSTILVSLFVLLWLTFT), 61-81 (FILFYVFFECSLIPTIILILG), 91-111 (ASYYFLFYTLLSSLPLLFIII), 133-153 (IFLLAILSFLVKLPVYFAHIW), 167-187 (MVLAAILLKLGGYGLYLVQVL), 189-209 (IYSETTLMGVCLMGGIFSCLI), 219-239 (LIAYSSVAHMSFVILGMLMSC), 247-267 (ILMMVSHGICSSGLFYLSYLF), 283-303 (ISLFPYLCFWWLSLSFLNMGL), and 315-335 (FFIGAFSLDWMVVGLSGILCF).

This sequence belongs to the complex I subunit 4 family.

The protein resides in the mitochondrion membrane. It carries out the reaction a ubiquinone + NADH + 5 H(+)(in) = a ubiquinol + NAD(+) + 4 H(+)(out). Core subunit of the mitochondrial membrane respiratory chain NADH dehydrogenase (Complex I) that is believed to belong to the minimal assembly required for catalysis. Complex I functions in the transfer of electrons from NADH to the respiratory chain. The immediate electron acceptor for the enzyme is believed to be ubiquinone. The polypeptide is NADH-ubiquinone oxidoreductase chain 4 (ND4) (Artemia franciscana (Brine shrimp)).